The primary structure comprises 165 residues: Small ribosomal subunit protein uS5 (165 aa).

The 64-residue stretch at 10–73 folds into the S5 DRBM domain; that stretch reads LNEKLIAVNR…EKARRNMVTV (64 aa).

The protein belongs to the universal ribosomal protein uS5 family. Part of the 30S ribosomal subunit. Contacts proteins S4 and S8.

Its function is as follows. With S4 and S12 plays an important role in translational accuracy. In terms of biological role, located at the back of the 30S subunit body where it stabilizes the conformation of the head with respect to the body. The protein is Small ribosomal subunit protein uS5 of Photobacterium profundum (strain SS9).